The sequence spans 260 residues: uncharacterized protein (260 aa).

An N-terminal signal peptide occupies residues 1 to 22 (MGYIKRIGLYISIFILIVMVAG). Cysteine 23 carries N-palmitoyl cysteine lipidation. Cysteine 23 carries the S-diacylglycerol cysteine lipid modification.

This sequence belongs to the staphylococcal tandem lipoprotein family.

The protein resides in the cell membrane. This is an uncharacterized protein from Staphylococcus aureus (strain bovine RF122 / ET3-1).